Here is a 154-residue protein sequence, read N- to C-terminus: Large ribosomal subunit protein uL15 (154 aa).

Positions 1–57 (MRFQDLHPQAGSRRRKRRIGRGIAAGQGASGGFGMRGQKSRSGRPTRPGFEGGQNPL) are disordered. Positions 23–35 (IAAGQGASGGFGM) are enriched in gly residues.

The protein belongs to the universal ribosomal protein uL15 family. Part of the 50S ribosomal subunit.

In terms of biological role, binds to the 23S rRNA. This Thermosynechococcus vestitus (strain NIES-2133 / IAM M-273 / BP-1) protein is Large ribosomal subunit protein uL15.